A 321-amino-acid polypeptide reads, in one-letter code: Cytochrome c biogenesis protein CcsA (321 aa).

The next 8 membrane-spanning stretches (helical) occupy residues 1–21 (MIFI…ISVV), 36–56 (LSSS…GLLI), 70–90 (LYES…ILEV), 97–117 (GLGA…TSGL), 143–163 (ILLS…FLII), 229–249 (VIGL…VWAN), 256–276 (WSWD…AIYL), and 290–310 (AIIA…VDLL).

This sequence belongs to the CcmF/CycK/Ccl1/NrfE/CcsA family. As to quaternary structure, may interact with Ccs1.

The protein resides in the plastid. Its subcellular location is the chloroplast thylakoid membrane. Functionally, required during biogenesis of c-type cytochromes (cytochrome c6 and cytochrome f) at the step of heme attachment. The sequence is that of Cytochrome c biogenesis protein CcsA from Cycas taitungensis (Prince sago).